The primary structure comprises 196 residues: Probable GTP-binding protein EngB (196 aa).

Residues 24 to 196 enclose the EngB-type G domain; the sequence is ELSEVALSGR…IWNLIEPYIS (173 aa). GTP is bound by residues 32 to 39, 59 to 63, 77 to 80, 144 to 147, and 176 to 178; these read GRSNVGKS, GKTQT, DVPG, TKED, and YSS. 2 residues coordinate Mg(2+): serine 39 and threonine 61.

It belongs to the TRAFAC class TrmE-Era-EngA-EngB-Septin-like GTPase superfamily. EngB GTPase family. Mg(2+) serves as cofactor.

Its function is as follows. Necessary for normal cell division and for the maintenance of normal septation. In Staphylococcus aureus (strain Mu3 / ATCC 700698), this protein is Probable GTP-binding protein EngB.